Here is a 125-residue protein sequence, read N- to C-terminus: Small ribosomal subunit protein uS12 (125 aa).

A disordered region spans residues 9-28 (RSERSKLKKKTKSPALKQCP). Asp89 is subject to 3-methylthioaspartic acid. A disordered region spans residues 104–125 (AQGVKDRKQGRSKYGTKRPKKA). A compositionally biased stretch (basic residues) spans 113–125 (GRSKYGTKRPKKA).

Belongs to the universal ribosomal protein uS12 family. In terms of assembly, part of the 30S ribosomal subunit. Contacts proteins S8 and S17. May interact with IF1 in the 30S initiation complex.

Its function is as follows. With S4 and S5 plays an important role in translational accuracy. Functionally, interacts with and stabilizes bases of the 16S rRNA that are involved in tRNA selection in the A site and with the mRNA backbone. Located at the interface of the 30S and 50S subunits, it traverses the body of the 30S subunit contacting proteins on the other side and probably holding the rRNA structure together. The combined cluster of proteins S8, S12 and S17 appears to hold together the shoulder and platform of the 30S subunit. In Rippkaea orientalis (strain PCC 8801 / RF-1) (Cyanothece sp. (strain PCC 8801)), this protein is Small ribosomal subunit protein uS12.